A 319-amino-acid chain; its full sequence is Cytochrome c biogenesis protein CcsA (319 aa).

8 consecutive transmembrane segments (helical) span residues 15–35 (FSIVSIVITIHLITLVVNKIV), 44–64 (GMILTFSCITGLLVIRWIFAG), 71–91 (LYESLIFLSWSFYIIHMIPYF), 96–116 (LSAITAPGAIFTQGFATSGFF), 141–161 (MILAYAALLCGSLLSVALLVI), 223–243 (VISLGFLFLTMGILSGAVWAN), 258–278 (WAFITWTIFAIYLHIKTNINL), and 284–304 (AIVASIGFLIIWICYFGVNLL).

Belongs to the CcmF/CycK/Ccl1/NrfE/CcsA family. In terms of assembly, may interact with Ccs1.

It is found in the plastid. The protein resides in the chloroplast thylakoid membrane. Functionally, required during biogenesis of c-type cytochromes (cytochrome c6 and cytochrome f) at the step of heme attachment. This is Cytochrome c biogenesis protein CcsA from Fagopyrum esculentum subsp. ancestrale (Wild buckwheat).